The sequence spans 956 residues: Translation initiation factor IF-2 (956 aa).

Positions 50–351 (FPADSGGAAN…APSIGGVQVP (302 aa)) are disordered. The span at 64–95 (APKPARAPKPAPKAAPAPPVEEAPAEPAPPAA) shows a compositional bias: pro residues. Low complexity-rich tracts occupy residues 96–107 (PEVVAAPEAPVA) and 121–136 (PEAP…ARPA). A compositionally biased stretch (basic and acidic residues) spans 146–155 (AAEKPADTRT). 2 stretches are compositionally biased toward gly residues: residues 171–192 (RPGG…GGPR) and 206–234 (RPGG…GQGG). A compositionally biased stretch (low complexity) spans 235 to 254 (SRPSPGMMPGRSAVGRPGAP). Residues 255 to 320 (ARGGSGGPGG…GTQGAFGRAG (66 aa)) are compositionally biased toward gly residues. Basic residues predominate over residues 324 to 333 (VRARKSRRAK). One can recognise a tr-type G domain in the interval 448–619 (ARPPVVTVMG…AVLLTADAAL (172 aa)). Residues 457–464 (GHVDHGKT) form a G1 region. 457-464 (GHVDHGKT) provides a ligand contact to GTP. Positions 482–486 (GITQH) are G2. Residues 507–510 (DTPG) form a G3 region. Residues 507 to 511 (DTPGH) and 561 to 564 (NKVD) contribute to the GTP site. The G4 stretch occupies residues 561-564 (NKVD). Positions 597–599 (SAK) are G5.

This sequence belongs to the TRAFAC class translation factor GTPase superfamily. Classic translation factor GTPase family. IF-2 subfamily.

It localises to the cytoplasm. Its function is as follows. One of the essential components for the initiation of protein synthesis. Protects formylmethionyl-tRNA from spontaneous hydrolysis and promotes its binding to the 30S ribosomal subunits. Also involved in the hydrolysis of GTP during the formation of the 70S ribosomal complex. This is Translation initiation factor IF-2 from Beutenbergia cavernae (strain ATCC BAA-8 / DSM 12333 / CCUG 43141 / JCM 11478 / NBRC 16432 / NCIMB 13614 / HKI 0122).